Consider the following 206-residue polypeptide: Ribosome maturation factor RimP (206 aa).

The segment at 164-206 is disordered; that stretch reads GGIPEGRAVPSDAVDLTDDSGVDSVEDDEAELEDVENEEGFDK. A compositionally biased stretch (acidic residues) spans 178-206; sequence DLTDDSGVDSVEDDEAELEDVENEEGFDK.

The protein belongs to the RimP family.

Its subcellular location is the cytoplasm. Functionally, required for maturation of 30S ribosomal subunits. This chain is Ribosome maturation factor RimP, found in Rhodococcus erythropolis (strain PR4 / NBRC 100887).